Here is a 268-residue protein sequence, read N- to C-terminus: Shikimate dehydrogenase (NADP(+)) (268 aa).

Shikimate contacts are provided by residues 13 to 15 (SLS) and Thr-60. Lys-64 acts as the Proton acceptor in catalysis. Residue Asp-76 participates in NADP(+) binding. Shikimate contacts are provided by Asn-85 and Asp-100. NADP(+)-binding positions include 124 to 128 (GAGGA), 148 to 153 (NRTMSR), and Ile-209. Tyr-211 provides a ligand contact to shikimate. NADP(+) is bound at residue Gly-232.

Belongs to the shikimate dehydrogenase family. As to quaternary structure, homodimer.

It carries out the reaction shikimate + NADP(+) = 3-dehydroshikimate + NADPH + H(+). It functions in the pathway metabolic intermediate biosynthesis; chorismate biosynthesis; chorismate from D-erythrose 4-phosphate and phosphoenolpyruvate: step 4/7. Functionally, involved in the biosynthesis of the chorismate, which leads to the biosynthesis of aromatic amino acids. Catalyzes the reversible NADPH linked reduction of 3-dehydroshikimate (DHSA) to yield shikimate (SA). The sequence is that of Shikimate dehydrogenase (NADP(+)) from Staphylococcus haemolyticus (strain JCSC1435).